A 333-amino-acid polypeptide reads, in one-letter code: Phenylalanine--tRNA ligase alpha subunit (333 aa).

A Mg(2+)-binding site is contributed by E254.

It belongs to the class-II aminoacyl-tRNA synthetase family. Phe-tRNA synthetase alpha subunit type 1 subfamily. Tetramer of two alpha and two beta subunits. It depends on Mg(2+) as a cofactor.

The protein resides in the cytoplasm. The enzyme catalyses tRNA(Phe) + L-phenylalanine + ATP = L-phenylalanyl-tRNA(Phe) + AMP + diphosphate + H(+). This chain is Phenylalanine--tRNA ligase alpha subunit (pheS), found in Xylella fastidiosa (strain 9a5c).